A 201-amino-acid chain; its full sequence is Glutathione peroxidase 1 (201 aa).

Phosphoserine occurs at positions 7 and 32. The active site involves U47. A non-standard amino acid (selenocysteine) is located at residue U47. N6-acetyllysine; alternate occurs at positions 62, 86, and 112. K62, K86, and K112 each carry N6-succinyllysine; alternate. Position 119 is an N6-acetyllysine (K119). K146 bears the N6-acetyllysine; alternate mark. Position 146 is an N6-succinyllysine; alternate (K146). S195 is subject to Phosphoserine.

Belongs to the glutathione peroxidase family. Homotetramer. Interacts with MIEN1. Post-translationally, during periods of oxidative stress, Sec-47 may react with a superoxide radical, irreversibly lose hydroselenide and be converted to dehydroalanine. In terms of tissue distribution, expressed in liver, kidney, lung, brain and heart.

The protein localises to the cytoplasm. It localises to the mitochondrion. The enzyme catalyses 2 glutathione + H2O2 = glutathione disulfide + 2 H2O. It catalyses the reaction a hydroperoxy polyunsaturated fatty acid + 2 glutathione = a hydroxy polyunsaturated fatty acid + glutathione disulfide + H2O. The catalysed reaction is tert-butyl hydroperoxide + 2 glutathione = tert-butanol + glutathione disulfide + H2O. It carries out the reaction cumene hydroperoxide + 2 glutathione = 2-phenylpropan-2-ol + glutathione disulfide + H2O. The enzyme catalyses (13S)-hydroperoxy-(9Z,11E)-octadecadienoate + 2 glutathione = (13S)-hydroxy-(9Z,11E)-octadecadienoate + glutathione disulfide + H2O. It catalyses the reaction (9S)-hydroperoxy-(10E,12Z)-octadecadienoate + 2 glutathione = (9S)-hydroxy-(10E,12Z)-octadecadienoate + glutathione disulfide + H2O. The catalysed reaction is (5S)-hydroperoxy-(6E,8Z,11Z,14Z)-eicosatetraenoate + 2 glutathione = (5S)-hydroxy-(6E,8Z,11Z,14Z)-eicosatetraenoate + glutathione disulfide + H2O. It carries out the reaction (12S)-hydroperoxy-(5Z,8Z,10E,14Z)-eicosatetraenoate + 2 glutathione = (12S)-hydroxy-(5Z,8Z,10E,14Z)-eicosatetraenoate + glutathione disulfide + H2O. The enzyme catalyses (12R)-hydroperoxy-(5Z,8Z,10E,14Z)-eicosatetraenoate + 2 glutathione = (12R)-hydroxy-(5Z,8Z,10E,14Z)-eicosatetraenoate + glutathione disulfide + H2O. It catalyses the reaction (15S)-hydroperoxy-(5Z,8Z,11Z,13E)-eicosatetraenoate + 2 glutathione = (15S)-hydroxy-(5Z,8Z,11Z,13E)-eicosatetraenoate + glutathione disulfide + H2O. The catalysed reaction is (5S)-hydroperoxy-(6E,8Z,11Z,14Z,17Z)-eicosapentaenoate + 2 glutathione = (5S)-hydroxy-(6E,8Z,11Z,14Z,17Z)-eicosapentaenoate + glutathione disulfide + H2O. It carries out the reaction (12S)-hydroperoxy-(5Z,8Z,10E,14Z,17Z)-eicosapentaenoate + 2 glutathione = (12S)-hydroxy-(5Z,8Z,10E,14Z,17Z)-eicosapentaenoate + glutathione disulfide + H2O. The enzyme catalyses (15S)-hydroperoxy-(5Z,8Z,11Z,13E,17Z)-eicosapentaenoate + 2 glutathione = (15S)-hydroxy-(5Z,8Z,11Z,13E,17Z)-eicosapentaenoate + glutathione disulfide + H2O. It catalyses the reaction (15S)-hydroperoxy-(11Z,13E)-eicosadienoate + 2 glutathione = (15S)-hydroxy-(11Z,13E)-eicosadienoate + glutathione disulfide + H2O. The catalysed reaction is (17S)-hydroperoxy-(4Z,7Z,10Z,13Z,15E,19Z)-docosahexaenoate + 2 glutathione = (17S)-hydroxy-(4Z,7Z,10Z,13Z,15E,19Z)-docosahexaenoate + glutathione disulfide + H2O. Its function is as follows. Catalyzes the reduction of hydroperoxides in a glutathione-dependent manner thus regulating cellular redox homeostasis. Can reduce small soluble hydroperoxides such as H2O2, cumene hydroperoxide and tert-butyl hydroperoxide, as well as several fatty acid-derived hydroperoxides. In platelets catalyzes the reduction of 12-hydroperoxyeicosatetraenoic acid, the primary product of the arachidonate 12-lipoxygenase pathway. This chain is Glutathione peroxidase 1, found in Mus musculus (Mouse).